A 388-amino-acid polypeptide reads, in one-letter code: LIM/homeobox protein Lhx9 (388 aa).

LIM zinc-binding domains follow at residues 69-130 (ISDR…CHLG) and 131-193 (ISAS…LSYT). 3 disordered regions span residues 239–263 (ENEADHLDRDQQPYPPSQKTKRMRT), 321–356 (ENGGVDKADGTSLPAPPSADSGALTPPGTATTLTDL), and 369–388 (SNMDSHESGSPSQTTLTNLF). The homeobox DNA-binding region spans 267–326 (HHQLRTMKSYFAINHNPDAKDLKQLAQKTGLTKRVLQVWFQNARAKFRRNLLRQENGGVD). The segment covering 344–356 (LTPPGTATTLTDL) has biased composition (low complexity). The span at 376–388 (SGSPSQTTLTNLF) shows a compositional bias: polar residues.

As to quaternary structure, interacts with LDB1 and LDB2.

Its subcellular location is the nucleus. Its function is as follows. Involved in gonadal development. The chain is LIM/homeobox protein Lhx9 (Lhx9) from Rattus norvegicus (Rat).